We begin with the raw amino-acid sequence, 96 residues long: Integration host factor subunit beta (96 aa).

Belongs to the bacterial histone-like protein family. In terms of assembly, heterodimer of an alpha and a beta chain.

Functionally, this protein is one of the two subunits of integration host factor, a specific DNA-binding protein that functions in genetic recombination as well as in transcriptional and translational control. The polypeptide is Integration host factor subunit beta (Caulobacter vibrioides (strain ATCC 19089 / CIP 103742 / CB 15) (Caulobacter crescentus)).